Here is a 57-residue protein sequence, read N- to C-terminus: uncharacterized protein (57 aa).

The helical transmembrane segment at 3 to 23 (PLTLLIIIGGVILGNELIISL) threads the bilayer. The interval 38–57 (KHKHKTQENYETFASDKKRT) is disordered.

Its subcellular location is the host membrane. This is an uncharacterized protein from Acidianus bottle-shaped virus (isolate Italy/Pozzuoli) (ABV).